Consider the following 740-residue polypeptide: Phosphoribosylformylglycinamidine synthase subunit PurL (740 aa).

Residue histidine 54 is part of the active site. Residues tyrosine 57 and lysine 96 each coordinate ATP. A Mg(2+)-binding site is contributed by glutamate 98. Substrate contacts are provided by residues 99–102 and arginine 121; that span reads SHNH. Histidine 100 functions as the Proton acceptor in the catalytic mechanism. Residue aspartate 122 coordinates Mg(2+). A substrate-binding site is contributed by glutamine 245. Aspartate 273 contributes to the Mg(2+) binding site. 317-319 is a substrate binding site; that stretch reads ESQ. Aspartate 499 and glycine 536 together coordinate ATP. Asparagine 537 contributes to the Mg(2+) binding site. Serine 539 lines the substrate pocket.

It belongs to the FGAMS family. In terms of assembly, monomer. Part of the FGAM synthase complex composed of 1 PurL, 1 PurQ and 2 PurS subunits.

It is found in the cytoplasm. The enzyme catalyses N(2)-formyl-N(1)-(5-phospho-beta-D-ribosyl)glycinamide + L-glutamine + ATP + H2O = 2-formamido-N(1)-(5-O-phospho-beta-D-ribosyl)acetamidine + L-glutamate + ADP + phosphate + H(+). The protein operates within purine metabolism; IMP biosynthesis via de novo pathway; 5-amino-1-(5-phospho-D-ribosyl)imidazole from N(2)-formyl-N(1)-(5-phospho-D-ribosyl)glycinamide: step 1/2. Functionally, part of the phosphoribosylformylglycinamidine synthase complex involved in the purines biosynthetic pathway. Catalyzes the ATP-dependent conversion of formylglycinamide ribonucleotide (FGAR) and glutamine to yield formylglycinamidine ribonucleotide (FGAM) and glutamate. The FGAM synthase complex is composed of three subunits. PurQ produces an ammonia molecule by converting glutamine to glutamate. PurL transfers the ammonia molecule to FGAR to form FGAM in an ATP-dependent manner. PurS interacts with PurQ and PurL and is thought to assist in the transfer of the ammonia molecule from PurQ to PurL. The chain is Phosphoribosylformylglycinamidine synthase subunit PurL from Anoxybacillus flavithermus (strain DSM 21510 / WK1).